The following is a 587-amino-acid chain: Pescadillo homolog (587 aa).

A coiled-coil region spans residues 267 to 306 (LKKKEEKNDEEGKNLSKKELNKAIKADQEQQENDEQDNNN). The disordered stretch occupies residues 290 to 311 (IKADQEQQENDEQDNNNGESVE). The segment covering 295 to 311 (EQQENDEQDNNNGESVE) has biased composition (acidic residues). Residues 335–434 (STAELFSKFI…ELINVNEYAA (100 aa)) enclose the BRCT domain. A disordered region spans residues 437-587 (TLPPHLSPWG…KKKEQLKKLN (151 aa)). Positions 459–494 (KEDGEAEEDTDEEEEEVEIEDGDEDQEDEEEEEDED) are enriched in acidic residues. Positions 470 to 587 (EEEEEVEIED…KKKEQLKKLN (118 aa)) form a coiled coil. Basic and acidic residues-rich tracts occupy residues 529 to 541 (SNKE…ELKK), 559 to 569 (IEKKENREKQL), and 578 to 587 (KKKEQLKKLN).

This sequence belongs to the pescadillo family. In terms of assembly, component of the NOP7 complex, composed of ERB1, NOP7 and YTM1. The complex is held together by ERB1, which interacts with NOP7 via its N-terminal domain and with YTM1 via a high-affinity interaction between the seven-bladed beta-propeller domains of the 2 proteins. The NOP7 complex associates with the 66S pre-ribosome.

The protein localises to the nucleus. It localises to the nucleolus. The protein resides in the nucleoplasm. In terms of biological role, component of the NOP7 complex, which is required for maturation of the 25S and 5.8S ribosomal RNAs and formation of the 60S ribosome. Required for the transition from hyphal to yeast growth. This is Pescadillo homolog from Candida albicans (strain SC5314 / ATCC MYA-2876) (Yeast).